The chain runs to 465 residues: ATP synthase subunit beta (465 aa).

152–159 (GGAGVGKT) provides a ligand contact to ATP.

The protein belongs to the ATPase alpha/beta chains family. F-type ATPases have 2 components, CF(1) - the catalytic core - and CF(0) - the membrane proton channel. CF(1) has five subunits: alpha(3), beta(3), gamma(1), delta(1), epsilon(1). CF(0) has three main subunits: a(1), b(2) and c(9-12). The alpha and beta chains form an alternating ring which encloses part of the gamma chain. CF(1) is attached to CF(0) by a central stalk formed by the gamma and epsilon chains, while a peripheral stalk is formed by the delta and b chains.

The protein localises to the cell inner membrane. It carries out the reaction ATP + H2O + 4 H(+)(in) = ADP + phosphate + 5 H(+)(out). Its function is as follows. Produces ATP from ADP in the presence of a proton gradient across the membrane. The catalytic sites are hosted primarily by the beta subunits. This chain is ATP synthase subunit beta, found in Campylobacter concisus (strain 13826).